The chain runs to 246 residues: uncharacterized protein (246 aa).

10-34 serves as a coordination point for NADP(+); the sequence is VITGASSGIGEETVNLLSENGAKLV. Serine 140 is a binding site for substrate. The Proton acceptor role is filled by tyrosine 153.

This sequence belongs to the short-chain dehydrogenases/reductases (SDR) family.

This is an uncharacterized protein from Staphylococcus saprophyticus subsp. saprophyticus (strain ATCC 15305 / DSM 20229 / NCIMB 8711 / NCTC 7292 / S-41).